The sequence spans 45 residues: Photosystem II reaction center protein K (45 aa).

Positions Met1–Ala8 are excised as a propeptide. A helical membrane pass occupies residues Leu24–Phe44.

This sequence belongs to the PsbK family. As to quaternary structure, PSII is composed of 1 copy each of membrane proteins PsbA, PsbB, PsbC, PsbD, PsbE, PsbF, PsbH, PsbI, PsbJ, PsbK, PsbL, PsbM, PsbT, PsbX, PsbY, PsbZ, Psb30/Ycf12, peripheral proteins PsbO, CyanoQ (PsbQ), PsbU, PsbV and a large number of cofactors. It forms dimeric complexes.

It is found in the cellular thylakoid membrane. One of the components of the core complex of photosystem II (PSII). PSII is a light-driven water:plastoquinone oxidoreductase that uses light energy to abstract electrons from H(2)O, generating O(2) and a proton gradient subsequently used for ATP formation. It consists of a core antenna complex that captures photons, and an electron transfer chain that converts photonic excitation into a charge separation. The protein is Photosystem II reaction center protein K of Microcystis aeruginosa (strain NIES-843 / IAM M-2473).